We begin with the raw amino-acid sequence, 619 residues long: MAIQLLPPQLANQIAAGEVVERPASVVKELVENSLDAGATRVDIDIDKGGSKLIRIRDNGAGIAKDELALALSRHATSKVHTLDDLEAILSFGFRGEALASISSVSRLTLTSKTAEQSEAWQAYAEGSQMDVKVTPAAHPQGSTIEVVDLFFNTPARRRFLKSDKTEFTHIDEWLKRIAIVRSDIHFTLTHNAKLVRQYRPANTDIQTQQRLAQICGRAFADQALSIACEHDDFVLTGYLQSPQDTVITDTNFFYVNGRLIRDRLVNHAVKQAFAEYGIEHQPGYVLMLSLDPHQVDVNVHPAKHEVRFHQSRYVHDFILQAVRSALVEMPALPLSDELEHHDNVAPMHTESNLMHDVKVVDTAEDEFTLNHGSSKAINSVSQFGSMHVPGKNNGLSGGYSAAIKPSYDKKPSSASSAQTKTAIANYGQLLHTPMNSAVSYVHEAAPQVTMPPLLAGEHWVICKDDKLSLLPIKSVLLAVRKKDVETKLANGLVSQPLLMPVSIAADLDWIETLAVRDQLLRQMGIELTIRFQQLIIKKVPPYLRECQLAIVIPELLQWIQLEQPTQSAIVGWLAQQSLSQFEPAQALWLQFCSLDDETQQTCYAQERIIPWQNWMKDN.

It belongs to the DNA mismatch repair MutL/HexB family.

Its function is as follows. This protein is involved in the repair of mismatches in DNA. It is required for dam-dependent methyl-directed DNA mismatch repair. May act as a 'molecular matchmaker', a protein that promotes the formation of a stable complex between two or more DNA-binding proteins in an ATP-dependent manner without itself being part of a final effector complex. In Shewanella frigidimarina (strain NCIMB 400), this protein is DNA mismatch repair protein MutL.